Reading from the N-terminus, the 286-residue chain is Shikimate dehydrogenase (NADP(+)) (286 aa).

Residues serine 19 to serine 21 and threonine 66 contribute to the shikimate site. The active-site Proton acceptor is the lysine 70. The shikimate site is built by asparagine 91 and aspartate 107. NADP(+) is bound by residues glycine 129–alanine 133 and leucine 229. Position 231 (tyrosine 231) interacts with shikimate. Glycine 252 contacts NADP(+).

This sequence belongs to the shikimate dehydrogenase family. As to quaternary structure, homodimer.

The catalysed reaction is shikimate + NADP(+) = 3-dehydroshikimate + NADPH + H(+). The protein operates within metabolic intermediate biosynthesis; chorismate biosynthesis; chorismate from D-erythrose 4-phosphate and phosphoenolpyruvate: step 4/7. Involved in the biosynthesis of the chorismate, which leads to the biosynthesis of aromatic amino acids. Catalyzes the reversible NADPH linked reduction of 3-dehydroshikimate (DHSA) to yield shikimate (SA). This chain is Shikimate dehydrogenase (NADP(+)), found in Prochlorococcus marinus (strain AS9601).